Reading from the N-terminus, the 141-residue chain is Ribosome-binding factor A (141 aa).

Belongs to the RbfA family. As to quaternary structure, monomer. Binds 30S ribosomal subunits, but not 50S ribosomal subunits or 70S ribosomes.

It is found in the cytoplasm. Its function is as follows. One of several proteins that assist in the late maturation steps of the functional core of the 30S ribosomal subunit. Associates with free 30S ribosomal subunits (but not with 30S subunits that are part of 70S ribosomes or polysomes). Required for efficient processing of 16S rRNA. May interact with the 5'-terminal helix region of 16S rRNA. In Afipia carboxidovorans (strain ATCC 49405 / DSM 1227 / KCTC 32145 / OM5) (Oligotropha carboxidovorans), this protein is Ribosome-binding factor A.